The primary structure comprises 435 residues: 5-methylthioadenosine/S-adenosylhomocysteine deaminase (435 aa).

Positions 65 and 67 each coordinate Zn(2+). Residues E94, R150, and H189 each contribute to the substrate site. H216 contributes to the Zn(2+) binding site. The substrate site is built by E219 and D304. D304 is a Zn(2+) binding site.

It belongs to the metallo-dependent hydrolases superfamily. MTA/SAH deaminase family. Zn(2+) is required as a cofactor.

It catalyses the reaction S-adenosyl-L-homocysteine + H2O + H(+) = S-inosyl-L-homocysteine + NH4(+). The catalysed reaction is S-methyl-5'-thioadenosine + H2O + H(+) = S-methyl-5'-thioinosine + NH4(+). In terms of biological role, catalyzes the deamination of 5-methylthioadenosine and S-adenosyl-L-homocysteine into 5-methylthioinosine and S-inosyl-L-homocysteine, respectively. Is also able to deaminate adenosine. The chain is 5-methylthioadenosine/S-adenosylhomocysteine deaminase from Bacillus cereus (strain B4264).